We begin with the raw amino-acid sequence, 187 residues long: Ribosome maturation factor RimM (187 aa).

The PRC barrel domain maps to 96–169 (EDEFFYADLE…KLVIDPTAAG (74 aa)).

Belongs to the RimM family. In terms of assembly, binds ribosomal protein uS19.

The protein resides in the cytoplasm. Functionally, an accessory protein needed during the final step in the assembly of 30S ribosomal subunit, possibly for assembly of the head region. Essential for efficient processing of 16S rRNA. May be needed both before and after RbfA during the maturation of 16S rRNA. It has affinity for free ribosomal 30S subunits but not for 70S ribosomes. This chain is Ribosome maturation factor RimM, found in Rhizobium meliloti (strain 1021) (Ensifer meliloti).